Consider the following 465-residue polypeptide: Ribulose bisphosphate carboxylase large chain (465 aa).

Position 4 is an N6,N6,N6-trimethyllysine (K4). Residues N113 and T163 each contribute to the substrate site. K165 acts as the Proton acceptor in catalysis. Substrate is bound at residue K167. K191, D193, and E194 together coordinate Mg(2+). K191 is subject to N6-carboxylysine. H284 acts as the Proton acceptor in catalysis. Substrate contacts are provided by R285, H317, and S369.

This sequence belongs to the RuBisCO large chain family. Type I subfamily. As to quaternary structure, heterohexadecamer of 8 large chains and 8 small chains; disulfide-linked. The disulfide link is formed within the large subunit homodimers. The cofactor is Mg(2+). Post-translationally, the disulfide bond which can form in the large chain dimeric partners within the hexadecamer appears to be associated with oxidative stress and protein turnover.

It localises to the plastid. Its subcellular location is the chloroplast. The enzyme catalyses 2 (2R)-3-phosphoglycerate + 2 H(+) = D-ribulose 1,5-bisphosphate + CO2 + H2O. It carries out the reaction D-ribulose 1,5-bisphosphate + O2 = 2-phosphoglycolate + (2R)-3-phosphoglycerate + 2 H(+). In terms of biological role, ruBisCO catalyzes two reactions: the carboxylation of D-ribulose 1,5-bisphosphate, the primary event in carbon dioxide fixation, as well as the oxidative fragmentation of the pentose substrate in the photorespiration process. Both reactions occur simultaneously and in competition at the same active site. This Bursera inaguensis (Elaphrium inaguense) protein is Ribulose bisphosphate carboxylase large chain.